A 128-amino-acid polypeptide reads, in one-letter code: Cyclin-dependent protein kinase inhibitor SMR1 (128 aa).

Residues 17–74 are disordered; the sequence is PIKIRSKTSKTKKDEGDDDEDDLRCSTPTSQEHKIPAVVDSPPPPPRKPRPPPSAPSA. Over residues 57–71 the composition is skewed to pro residues; sequence SPPPPPRKPRPPPSA.

In terms of assembly, interacts with CDKB1-1. Interacts with CPR5. Expressed in roots, leaves, stems, siliques and flowers. Expressed in the root elongation zone.

The protein resides in the nucleus. In terms of biological role, probable cyclin-dependent protein kinase (CDK) inhibitor that functions as a repressor of mitosis in the endoreduplication cell cycle. Cooperates with SIM and SMR2 to promote endoreplication during leaf development. Specifically regulates endoreduplication in epidermal pavement cells to produce the cell size pattern. Is necessary for giant cell formation. Positive regulator of effector-triggered immunity (ETI). This Arabidopsis thaliana (Mouse-ear cress) protein is Cyclin-dependent protein kinase inhibitor SMR1.